The sequence spans 360 residues: Peptide chain release factor 1 (360 aa).

Position 235 is an N5-methylglutamine (Gln-235). The disordered stretch occupies residues 284 to 303; the sequence is RERQSKEAAERKSLVGSGDR.

It belongs to the prokaryotic/mitochondrial release factor family. Methylated by PrmC. Methylation increases the termination efficiency of RF1.

The protein resides in the cytoplasm. Peptide chain release factor 1 directs the termination of translation in response to the peptide chain termination codons UAG and UAA. The sequence is that of Peptide chain release factor 1 from Bordetella avium (strain 197N).